A 255-amino-acid chain; its full sequence is tRNA pseudouridine synthase B (255 aa).

Asp-58 serves as the catalytic Nucleophile.

The protein belongs to the pseudouridine synthase TruB family. Type 1 subfamily.

The enzyme catalyses uridine(55) in tRNA = pseudouridine(55) in tRNA. Its function is as follows. Responsible for synthesis of pseudouridine from uracil-55 in the psi GC loop of transfer RNAs. This Chlorobium chlorochromatii (strain CaD3) protein is tRNA pseudouridine synthase B.